Consider the following 388-residue polypeptide: MNLHEYQAKQLFARYGLPAPVGYACTTPREAEEAASKIGAGPWVVKCQVHAGGRGKAGGVKVVKSKEEIRAFAENWLGKRLVTYQTDANGQPVNQILVEAATDIGKELYLGAVVDRSSRRVVFMASTEGGVEIEKVAEETPHLIHKVALDPLTGPMPYQGRELAFKLGLEGKLVQQFTKIFMGLATIFLERDLALIEINPLVITKQGDLICLDGKLGADGNALFRQPDLREMRDQSQEDPREAQAAQWELNYVALDGNIGCMVNGAGLAMGTMDIVKLHGGEPANFLDVGGGATKERVTEAFKIILSDDNVKAVLVNIFGGIVRCDLIADGIIGAVEEVGVNVPVVVRLEGNNAELGAKKLADSGLNIIAAKSLTDAAQQVVAAVEGK.

In terms of domain architecture, ATP-grasp spans 9-244 (KQLFARYGLP…QSQEDPREAQ (236 aa)). ATP is bound by residues lysine 46, 53-55 (GRG), glutamate 99, threonine 102, and glutamate 107. Residues asparagine 199 and aspartate 213 each coordinate Mg(2+). Residues asparagine 264 and 321-323 (GIV) contribute to the substrate site.

It belongs to the succinate/malate CoA ligase beta subunit family. As to quaternary structure, heterotetramer of two alpha and two beta subunits. It depends on Mg(2+) as a cofactor.

The enzyme catalyses succinate + ATP + CoA = succinyl-CoA + ADP + phosphate. The catalysed reaction is GTP + succinate + CoA = succinyl-CoA + GDP + phosphate. It functions in the pathway carbohydrate metabolism; tricarboxylic acid cycle; succinate from succinyl-CoA (ligase route): step 1/1. Succinyl-CoA synthetase functions in the citric acid cycle (TCA), coupling the hydrolysis of succinyl-CoA to the synthesis of either ATP or GTP and thus represents the only step of substrate-level phosphorylation in the TCA. The beta subunit provides nucleotide specificity of the enzyme and binds the substrate succinate, while the binding sites for coenzyme A and phosphate are found in the alpha subunit. The protein is Succinate--CoA ligase [ADP-forming] subunit beta of Salmonella choleraesuis (strain SC-B67).